The chain runs to 655 residues: p-hydroxybenzoic acid efflux pump subunit AaeB (655 aa).

The next 11 helical transmembrane spans lie at F13–L33, W38–P58, L69–I89, L93–V113, W121–L141, E152–V172, L370–V390, F407–P427, Q431–V451, M459–F479, and F482–L502.

Belongs to the aromatic acid exporter ArAE (TC 2.A.85) family.

The protein resides in the cell inner membrane. In terms of biological role, forms an efflux pump with AaeA. Could function as a metabolic relief valve, allowing to eliminate certain compounds when they accumulate to high levels in the cell. The polypeptide is p-hydroxybenzoic acid efflux pump subunit AaeB (Citrobacter koseri (strain ATCC BAA-895 / CDC 4225-83 / SGSC4696)).